The following is a 173-amino-acid chain: Large ribosomal subunit protein uL16 (173 aa).

This sequence belongs to the universal ribosomal protein uL16 family.

This Methanococcus aeolicus (strain ATCC BAA-1280 / DSM 17508 / OCM 812 / Nankai-3) protein is Large ribosomal subunit protein uL16.